Reading from the N-terminus, the 328-residue chain is GMP reductase (328 aa).

Catalysis depends on cysteine 176, which acts as the Thioimidate intermediate. 205–228 serves as a coordination point for NADP(+); that stretch reads IIADGGIRTHGDIAKSIRFGASMI.

Belongs to the IMPDH/GMPR family. GuaC type 2 subfamily.

It catalyses the reaction IMP + NH4(+) + NADP(+) = GMP + NADPH + 2 H(+). Its function is as follows. Catalyzes the irreversible NADPH-dependent deamination of GMP to IMP. It functions in the conversion of nucleobase, nucleoside and nucleotide derivatives of G to A nucleotides, and in maintaining the intracellular balance of A and G nucleotides. The sequence is that of GMP reductase from Streptococcus pneumoniae serotype 4 (strain ATCC BAA-334 / TIGR4).